The sequence spans 402 residues: Envelope glycoprotein D (402 aa).

The signal sequence occupies residues 1–17 (MLLAALLAALVARTTLG). Intrachain disulfides connect Cys66–Cys189, Cys105–Cys205, and Cys117–Cys126. Residues 238 to 316 (YRKNGRTLPR…RPTPRPPRPE (79 aa)) are profusion. Positions 252-350 (ATPYAIDPAR…PRTPAAPGVS (99 aa)) are disordered. The span at 269–278 (PRPRPRPRPR) shows a compositional bias: basic residues. Residues 282–292 (EPAPATPAPPD) show a composition bias toward pro residues. Over residues 293–304 (RLPEPATRDHAA) the composition is skewed to basic and acidic residues. A helical transmembrane segment spans residues 356 to 376 (IVGTGTAMGALLVGVCVYIFF).

The protein belongs to the herpesviridae glycoprotein D family. Post-translationally, not N-glycosylated.

Its subcellular location is the virion membrane. Envelope glycoprotein that binds to the host cell entry receptor NECTIN1, promoting the virus entry into host cells. In contrast, does not use host TNFRSF14 as receptor. May trigger fusion with host membrane, by recruiting the fusion machinery composed of gB and gH/gL. This Suid herpesvirus 1 (strain Rice) (SuHV-1) protein is Envelope glycoprotein D.